The sequence spans 1651 residues: Roundabout homolog 1 (1651 aa).

The first 25 residues, 1 to 25 (MKWKHLPLLVMISLLTLSKKHLLLA), serve as a signal peptide directing secretion. The Extracellular portion of the chain corresponds to 26-897 (QLIPDPEDLE…QQISDVVKQP (872 aa)). The disordered stretch occupies residues 31–66 (PEDLERGNDNGTPAPTSDNDDNSLGYTGSRLRQEDF). Over residues 39-56 (DNGTPAPTSDNDDNSLGY) the composition is skewed to polar residues. Ig-like C2-type domains are found at residues 68-164 (PRIV…ASLE), 170-257 (DDFR…ADVT), 262-346 (PSFV…ATLT), 351-446 (PHFV…LEVT), and 455-541 (PVIR…AYIE). A disulfide bridge connects residues cysteine 89 and cysteine 147. N-linked (GlcNAc...) asparagine glycosylation occurs at asparagine 160. Intrachain disulfides connect cysteine 191–cysteine 240, cysteine 283–cysteine 330, and cysteine 372–cysteine 428. Asparagine 463 carries N-linked (GlcNAc...) asparagine glycosylation. An intrachain disulfide couples cysteine 476 to cysteine 525. Fibronectin type-III domains lie at 563 to 657 (APSK…TQDV), 676 to 773 (VVLH…TLEE), and 778 to 874 (PPRS…LDSH). Residues asparagine 790, asparagine 820, and asparagine 827 are each glycosylated (N-linked (GlcNAc...) asparagine). A helical transmembrane segment spans residues 898 to 918 (AFIAGIGAACWIILMVFSIWL). Topologically, residues 919 to 1651 (YRHRKKRNGL…NNEELEETES (733 aa)) are cytoplasmic. Position 940 is a phosphoserine (serine 940). Threonine 948 carries the phosphothreonine modification. Tyrosine 1038 carries the phosphotyrosine modification. The residue at position 1055 (serine 1055) is a Phosphoserine. Tyrosine 1073 carries the post-translational modification Phosphotyrosine. The segment at 1086 to 1107 (NMNNGGGDSSEKHWKPPGQQKQ) is disordered. Tyrosine 1114 carries the post-translational modification Phosphotyrosine. Disordered stretches follow at residues 1137 to 1337 (PYNH…ADME), 1352 to 1397 (EQTP…DGSF), and 1420 to 1651 (RRQM…ETES). Low complexity predominate over residues 1147–1163 (GGSYNSSDRGSSTSGSQ). Over residues 1186 to 1196 (LPPPPAHPPPH) the composition is skewed to pro residues. Threonine 1240 carries the phosphothreonine modification. Residues 1255 to 1269 (YSHQSTATLTPSPQE) are compositionally biased toward polar residues. Residues 1281–1293 (DLGHMPHPPDRRR) show a composition bias toward basic and acidic residues. Residues 1296 to 1307 (VSPPPPPRPISP) show a composition bias toward pro residues. A Phosphoserine modification is found at serine 1297. Residues 1322 to 1336 (MDTDAPEEEEDEADM) are compositionally biased toward acidic residues. Low complexity predominate over residues 1384–1397 (SSGRSSVSSSDGSF). Residues 1438 to 1451 (PRPTSPVSTDSNMS) show a composition bias toward polar residues. A compositionally biased stretch (basic residues) spans 1459–1470 (RPTKKQKHQPGH). Residues 1480-1490 (LPPPPVPPPAI) are compositionally biased toward pro residues. Basic and acidic residues-rich tracts occupy residues 1516–1541 (ARAD…RQVT) and 1549–1573 (DPRE…RDLP). Residues 1592–1601 (FPTSNNPRDP) show a composition bias toward polar residues. A compositionally biased stretch (low complexity) spans 1602–1614 (SSSSSMSSRGSGS). Positions 1642 to 1651 (NNEELEETES) are enriched in acidic residues.

This sequence belongs to the immunoglobulin superfamily. ROBO family. Homodimer. Dimerization is mediated by the extracellular domain and is independent of SLIT liganding. Interacts with SLIT1. Interacts with SLIT2. Interacts with FLRT3. Interacts with MYO9B (via Rho-GAP domain). In terms of processing, ubiquitinated. May be deubiquitinated by USP33. As to expression, expressed in embryonal brain and spinal cord.

It is found in the cell membrane. The protein resides in the cell projection. The protein localises to the axon. Its subcellular location is the endoplasmic reticulum-Golgi intermediate compartment membrane. Receptor for SLIT1 and SLIT2 that mediates cellular responses to molecular guidance cues in cellular migration, including axonal navigation at the ventral midline of the neural tube and projection of axons to different regions during neuronal development. Interaction with the intracellular domain of FLRT3 mediates axon attraction towards cells expressing NTN1. In axon growth cones, the silencing of the attractive effect of NTN1 by SLIT2 may require the formation of a ROBO1-DCC complex. Plays a role in the regulation of cell migration via its interaction with MYO9B; inhibits MYO9B-mediated stimulation of RHOA GTPase activity, and thereby leads to increased levels of active, GTP-bound RHOA. May be required for lung development. The protein is Roundabout homolog 1 (Robo1) of Rattus norvegicus (Rat).